Consider the following 356-residue polypeptide: UDP-N-acetylglucosamine--N-acetylmuramyl-(pentapeptide) pyrophosphoryl-undecaprenol N-acetylglucosamine transferase (356 aa).

UDP-N-acetyl-alpha-D-glucosamine is bound by residues 13–15 (TGG), Asn125, Arg161, Ser189, Ile243, and Gln288.

It belongs to the glycosyltransferase 28 family. MurG subfamily.

It is found in the cell inner membrane. It carries out the reaction di-trans,octa-cis-undecaprenyl diphospho-N-acetyl-alpha-D-muramoyl-L-alanyl-D-glutamyl-meso-2,6-diaminopimeloyl-D-alanyl-D-alanine + UDP-N-acetyl-alpha-D-glucosamine = di-trans,octa-cis-undecaprenyl diphospho-[N-acetyl-alpha-D-glucosaminyl-(1-&gt;4)]-N-acetyl-alpha-D-muramoyl-L-alanyl-D-glutamyl-meso-2,6-diaminopimeloyl-D-alanyl-D-alanine + UDP + H(+). The protein operates within cell wall biogenesis; peptidoglycan biosynthesis. Functionally, cell wall formation. Catalyzes the transfer of a GlcNAc subunit on undecaprenyl-pyrophosphoryl-MurNAc-pentapeptide (lipid intermediate I) to form undecaprenyl-pyrophosphoryl-MurNAc-(pentapeptide)GlcNAc (lipid intermediate II). The chain is UDP-N-acetylglucosamine--N-acetylmuramyl-(pentapeptide) pyrophosphoryl-undecaprenol N-acetylglucosamine transferase from Cupriavidus metallidurans (strain ATCC 43123 / DSM 2839 / NBRC 102507 / CH34) (Ralstonia metallidurans).